Here is a 110-residue protein sequence, read N- to C-terminus: V-type proton ATPase subunit G 1 (110 aa).

This sequence belongs to the V-ATPase G subunit family. As to quaternary structure, V-ATPase is a heteromultimeric enzyme composed of a peripheral catalytic V1 complex (components A to H) attached to an integral membrane V0 proton pore complex (components: a, c, c', c'' and d).

Catalytic subunit of the peripheral V1 complex of vacuolar ATPase (V-ATPase). V-ATPase is responsible for acidifying a variety of intracellular compartments in eukaryotic cells. This Nicotiana tabacum (Common tobacco) protein is V-type proton ATPase subunit G 1 (VATG1).